Here is a 404-residue protein sequence, read N- to C-terminus: 5-azacytidine-induced protein 2 (404 aa).

The homodimerization stretch occupies residues 1–198 (MDTLVEDDIC…TELQKARQTG (198 aa)). Positions 40 to 198 (ALVTAYEDIK…TELQKARQTG (159 aa)) form a coiled coil. The interaction with TBK1 and IKBKE stretch occupies residues 229-269 (SDHMQHAYWELRREMANLHLVTRVQAELLRQLKTAAAGKAC). Ser330 carries the phosphoserine modification. Disordered stretches follow at residues 332 to 351 (TDNE…HNSY) and 356 to 390 (LEDN…LPPL). A Phosphoserine modification is found at Ser365.

In terms of assembly, homodimer. Interacts with IKBKE, TBK1 and TICAM1. Interacts with TAX1BP1. Interacts with CALCOCO2. Ubiquitinated via 'Lys-48'-linked polyubiquitination by TRIM38, leading to its degradation.

The protein localises to the cytoplasm. Functionally, adapter protein which binds TBK1 and IKBKE playing a role in antiviral innate immunity. Activates serine/threonine-protein kinase TBK1 and facilitates its oligomerization. Enhances the phosphorylation of NF-kappa-B p65 subunit RELA by TBK1. Promotes TBK1-induced as well as TNF-alpha or PMA-induced activation of NF-kappa-B. Participates in IFNB promoter activation via TICAM1. This chain is 5-azacytidine-induced protein 2 (Azi2), found in Rattus norvegicus (Rat).